We begin with the raw amino-acid sequence, 430 residues long: Enolase (430 aa).

Gln167 is a binding site for (2R)-2-phosphoglycerate. Catalysis depends on Glu209, which acts as the Proton donor. Asp245, Glu286, and Asp313 together coordinate Mg(2+). (2R)-2-phosphoglycerate-binding residues include Lys338, Arg367, Ser368, and Lys389. The Proton acceptor role is filled by Lys338.

The protein belongs to the enolase family. Mg(2+) serves as cofactor.

The protein localises to the cytoplasm. The protein resides in the secreted. It localises to the cell surface. It catalyses the reaction (2R)-2-phosphoglycerate = phosphoenolpyruvate + H2O. The protein operates within carbohydrate degradation; glycolysis; pyruvate from D-glyceraldehyde 3-phosphate: step 4/5. Its function is as follows. Catalyzes the reversible conversion of 2-phosphoglycerate (2-PG) into phosphoenolpyruvate (PEP). It is essential for the degradation of carbohydrates via glycolysis. The sequence is that of Enolase from Parasynechococcus marenigrum (strain WH8102).